Consider the following 106-residue polypeptide: SH3 domain-binding glutamic acid-rich-like protein 2-B (106 aa).

Residues 61–67 (QGNPLPP) carry the SH3-binding motif.

This sequence belongs to the SH3BGR family.

Its subcellular location is the nucleus. In Xenopus laevis (African clawed frog), this protein is SH3 domain-binding glutamic acid-rich-like protein 2-B (sh3bgrl2-b).